The sequence spans 196 residues: Imidazole glycerol phosphate synthase subunit HisH (196 aa).

Positions 2–196 (KATLINYGVG…LRNFYSWVKR (195 aa)) constitute a Glutamine amidotransferase type-1 domain. The Nucleophile role is filled by cysteine 76. Active-site residues include histidine 175 and glutamate 177.

As to quaternary structure, heterodimer of HisH and HisF.

Its subcellular location is the cytoplasm. The catalysed reaction is 5-[(5-phospho-1-deoxy-D-ribulos-1-ylimino)methylamino]-1-(5-phospho-beta-D-ribosyl)imidazole-4-carboxamide + L-glutamine = D-erythro-1-(imidazol-4-yl)glycerol 3-phosphate + 5-amino-1-(5-phospho-beta-D-ribosyl)imidazole-4-carboxamide + L-glutamate + H(+). The enzyme catalyses L-glutamine + H2O = L-glutamate + NH4(+). It functions in the pathway amino-acid biosynthesis; L-histidine biosynthesis; L-histidine from 5-phospho-alpha-D-ribose 1-diphosphate: step 5/9. Functionally, IGPS catalyzes the conversion of PRFAR and glutamine to IGP, AICAR and glutamate. The HisH subunit catalyzes the hydrolysis of glutamine to glutamate and ammonia as part of the synthesis of IGP and AICAR. The resulting ammonia molecule is channeled to the active site of HisF. The sequence is that of Imidazole glycerol phosphate synthase subunit HisH from Sulfurisphaera tokodaii (strain DSM 16993 / JCM 10545 / NBRC 100140 / 7) (Sulfolobus tokodaii).